Here is a 388-residue protein sequence, read N- to C-terminus: Dipeptidase verJ (388 aa).

3 residues coordinate Zn(2+): H29, D31, and E142. Substrate contacts are provided by H169, R243, and D300.

It belongs to the metallo-dependent hydrolases superfamily. Peptidase M19 family. The cofactor is Zn(2+).

It catalyses the reaction an L-aminoacyl-L-amino acid + H2O = 2 an L-alpha-amino acid. Its pathway is mycotoxin biosynthesis. In terms of biological role, dipeptidase; part of the gene cluster that mediates the biosynthesis of 11'-deoxyverticillin A, one of the dimeric epipolythiodioxopiperazines (ETPs) from the verticillin family that act as mycotoxins. 11'-deoxyverticillin A is required for normal conidiation. The nonribosomal peptide synthetase verP is speculated to be responsible for condensation of amino acids to form the carbon skeleton of verticillin, whereas the cluster-specific tailoring enzymes are involved in further modifications leading to the production of 11'-deoxyverticillin A. The polypeptide is Dipeptidase verJ (Clonostachys rogersoniana).